Here is a 475-residue protein sequence, read N- to C-terminus: Sulfate adenylyltransferase subunit 1 (475 aa).

Residues 25–239 (KSLLRFLTCG…EVLETVEIQR (215 aa)) enclose the tr-type G domain. A G1 region spans residues 34–41 (GSVDDGKS). A GTP-binding site is contributed by 34 to 41 (GSVDDGKS). The tract at residues 92–96 (GITID) is G2. The tract at residues 113–116 (DTPG) is G3. Residues 113-117 (DTPGH) and 168-171 (NKMD) contribute to the GTP site. A G4 region spans residues 168-171 (NKMD). The interval 206 to 208 (SAL) is G5.

The protein belongs to the TRAFAC class translation factor GTPase superfamily. Classic translation factor GTPase family. CysN/NodQ subfamily. In terms of assembly, heterodimer composed of CysD, the smaller subunit, and CysN.

It catalyses the reaction sulfate + ATP + H(+) = adenosine 5'-phosphosulfate + diphosphate. The protein operates within sulfur metabolism; hydrogen sulfide biosynthesis; sulfite from sulfate: step 1/3. Functionally, with CysD forms the ATP sulfurylase (ATPS) that catalyzes the adenylation of sulfate producing adenosine 5'-phosphosulfate (APS) and diphosphate, the first enzymatic step in sulfur assimilation pathway. APS synthesis involves the formation of a high-energy phosphoric-sulfuric acid anhydride bond driven by GTP hydrolysis by CysN coupled to ATP hydrolysis by CysD. The polypeptide is Sulfate adenylyltransferase subunit 1 (Escherichia coli O127:H6 (strain E2348/69 / EPEC)).